Consider the following 362-residue polypeptide: 11-beta-hydroxysteroid dehydrogenase B (362 aa).

Residues 10–30 (FVVPPASLLMLAFTWPTLFFI) form a helical; Signal-anchor for type II membrane protein membrane-spanning segment. Positions 13 to 26 (PPASLLMLAFTWPT) match the Proline-knob motif. An NADP(+)-binding site is contributed by 55 to 81 (GASSGIGEQIAYQYAKRGANLVLVARR). Ser185 serves as a coordination point for substrate. Tyr198 functions as the Proton acceptor in the catalytic mechanism. Residues 198–202 (YSAAK) and Lys202 contribute to the NADP(+) site. The interval 321 to 362 (TGRPLLETSSPRRSAVMEGSSPRRLPPGPLTFSPAFQQQKSE) is disordered.

Belongs to the short-chain dehydrogenases/reductases (SDR) family. Expressed in seeds (at protein level). Not expressed in stem, leaf or root (at protein level).

The protein resides in the lipid droplet. The protein localises to the membrane. It carries out the reaction an 11beta-hydroxysteroid + NADP(+) = an 11-oxosteroid + NADPH + H(+). The enzyme catalyses corticosterone + NADP(+) = 11-dehydrocorticosterone + NADPH + H(+). The catalysed reaction is 17beta-estradiol + NADP(+) = estrone + NADPH + H(+). In terms of biological role, has dehydrogenase activity against corticosterone (11 beta-hydroxysteroid) and estradiol (17 beta-hydroxysteroid), with similar activities to both sterols in the presence of NADP(+), but negligible activity to either sterol in the presence of NAD(+). May be involved in signal transduction regulated by various sterols. The chain is 11-beta-hydroxysteroid dehydrogenase B from Sesamum indicum (Oriental sesame).